The chain runs to 144 residues: Large ribosomal subunit protein uL15 (144 aa).

Residues 1-10 (MKLHELKPAE) are compositionally biased toward basic and acidic residues. A disordered region spans residues 1-52 (MKLHELKPAEGSRQVRNRVGRGTSSGNGKTAGRGQKGQKARGKVRLGFEGGQ). Over residues 23–35 (TSSGNGKTAGRGQ) the composition is skewed to gly residues.

It belongs to the universal ribosomal protein uL15 family. As to quaternary structure, part of the 50S ribosomal subunit.

In terms of biological role, binds to the 23S rRNA. The chain is Large ribosomal subunit protein uL15 from Ligilactobacillus salivarius (strain UCC118) (Lactobacillus salivarius).